The chain runs to 141 residues: 16 kDa protein (141 aa).

The interval 100 to 119 (TVKKSRNSKPSKKKFKERKE) is disordered. Positions 102–115 (KKSRNSKPSKKKFK) are enriched in basic residues.

This Tobacco rattle virus (strain PLB) protein is 16 kDa protein.